We begin with the raw amino-acid sequence, 421 residues long: ATP-dependent RNA helicase RhlB (421 aa).

Positions 9–37 (QKFSDFALHPKVIEALENKGFHNCTPIQA) match the Q motif motif. The region spanning 40 to 219 (LPLTLAGRDV…FEQMNNAEYV (180 aa)) is the Helicase ATP-binding domain. 53–60 (AQTGTGKT) is a binding site for ATP. The DEAD box signature appears at 165-168 (DEAD). The 146-residue stretch at 245–390 (RLLQTLIEEE…VSKYNPEALM (146 aa)) folds into the Helicase C-terminal domain. The tract at residues 393–421 (LPKPLRLTRSRPGNGPRRTGAPRNRRRSG) is disordered. The segment covering 403–414 (RPGNGPRRTGAP) has biased composition (low complexity).

This sequence belongs to the DEAD box helicase family. RhlB subfamily. As to quaternary structure, component of the RNA degradosome, which is a multiprotein complex involved in RNA processing and mRNA degradation.

It localises to the cytoplasm. It catalyses the reaction ATP + H2O = ADP + phosphate + H(+). DEAD-box RNA helicase involved in RNA degradation. Has RNA-dependent ATPase activity and unwinds double-stranded RNA. The sequence is that of ATP-dependent RNA helicase RhlB from Citrobacter koseri (strain ATCC BAA-895 / CDC 4225-83 / SGSC4696).